The following is a 216-amino-acid chain: Fibroblast growth factor 19 (216 aa).

The signal sequence occupies residues 1–24 (MRSGCVVVHVWILAGLWLAVAGRP). 2 disulfides stabilise this stretch: Cys-58-Cys-70 and Cys-102-Cys-120.

Belongs to the heparin-binding growth factors family. As to quaternary structure, interacts with FGFR1, FGFR2, FGFR3 and FGFR4. Affinity between fibroblast growth factors (FGFs) and their receptors is increased by KL, KLB and heparan sulfate glycosaminoglycans that function as coreceptors. Interacts with KL; this interaction is direct. Interacts with KLB; this interaction is direct. Interacts with FGFR4 in the presence of heparin, KL or KLB. Interacts with MALRD1. In terms of tissue distribution, expressed in fetal brain, cartilage, retina, and adult gall bladder.

It localises to the secreted. Involved in the suppression of bile acid biosynthesis through down-regulation of CYP7A1 expression, following positive regulation of the JNK and ERK1/2 cascades. Stimulates glucose uptake in adipocytes. Activity requires the presence of KLB and FGFR4. This is Fibroblast growth factor 19 (FGF19) from Homo sapiens (Human).